We begin with the raw amino-acid sequence, 243 residues long: 4-hydroxy-tetrahydrodipicolinate reductase (243 aa).

NAD(+)-binding positions include 9-14, 78-80, and 104-107; these read GANGKM, GTS, and APNF. The Proton donor/acceptor role is filled by histidine 134. Residue histidine 135 coordinates (S)-2,3,4,5-tetrahydrodipicolinate. The Proton donor role is filled by lysine 138. 144–145 provides a ligand contact to (S)-2,3,4,5-tetrahydrodipicolinate; it reads GT.

It belongs to the DapB family.

The protein localises to the cytoplasm. It catalyses the reaction (S)-2,3,4,5-tetrahydrodipicolinate + NAD(+) + H2O = (2S,4S)-4-hydroxy-2,3,4,5-tetrahydrodipicolinate + NADH + H(+). The catalysed reaction is (S)-2,3,4,5-tetrahydrodipicolinate + NADP(+) + H2O = (2S,4S)-4-hydroxy-2,3,4,5-tetrahydrodipicolinate + NADPH + H(+). The protein operates within amino-acid biosynthesis; L-lysine biosynthesis via DAP pathway; (S)-tetrahydrodipicolinate from L-aspartate: step 4/4. Catalyzes the conversion of 4-hydroxy-tetrahydrodipicolinate (HTPA) to tetrahydrodipicolinate. This Legionella pneumophila (strain Paris) protein is 4-hydroxy-tetrahydrodipicolinate reductase.